The primary structure comprises 88 residues: Conotoxin Ca8.3 (88 aa).

A signal peptide spans 1 to 21; it reads MMLKMGAMFVLLLLFILPSSQ. The propeptide occupies 22–46; it reads QEGDVQARKTHLKSGFYGTLAMSTR.

This sequence belongs to the conotoxin S superfamily. Contains 5 disulfide bonds. Expressed by the venom duct.

The protein localises to the secreted. The polypeptide is Conotoxin Ca8.3 (Conus caracteristicus (Characteristic cone)).